Here is a 95-residue protein sequence, read N- to C-terminus: Aspartyl/glutamyl-tRNA(Asn/Gln) amidotransferase subunit C (95 aa).

Belongs to the GatC family. Heterotrimer of A, B and C subunits.

The catalysed reaction is L-glutamyl-tRNA(Gln) + L-glutamine + ATP + H2O = L-glutaminyl-tRNA(Gln) + L-glutamate + ADP + phosphate + H(+). The enzyme catalyses L-aspartyl-tRNA(Asn) + L-glutamine + ATP + H2O = L-asparaginyl-tRNA(Asn) + L-glutamate + ADP + phosphate + 2 H(+). Functionally, allows the formation of correctly charged Asn-tRNA(Asn) or Gln-tRNA(Gln) through the transamidation of misacylated Asp-tRNA(Asn) or Glu-tRNA(Gln) in organisms which lack either or both of asparaginyl-tRNA or glutaminyl-tRNA synthetases. The reaction takes place in the presence of glutamine and ATP through an activated phospho-Asp-tRNA(Asn) or phospho-Glu-tRNA(Gln). This is Aspartyl/glutamyl-tRNA(Asn/Gln) amidotransferase subunit C from Campylobacter curvus (strain 525.92).